A 1025-amino-acid chain; its full sequence is Beta-galactosidase (1025 aa).

The active-site Proton donor is Glu482. Glu551 acts as the Nucleophile in catalysis.

It belongs to the glycosyl hydrolase 2 family.

The enzyme catalyses Hydrolysis of terminal non-reducing beta-D-galactose residues in beta-D-galactosides.. This chain is Beta-galactosidase (LAC4), found in Kluyveromyces lactis (strain ATCC 8585 / CBS 2359 / DSM 70799 / NBRC 1267 / NRRL Y-1140 / WM37) (Yeast).